Consider the following 613-residue polypeptide: tRNA 5-methylaminomethyl-2-thiouridine biosynthesis bifunctional protein MnmC (613 aa).

The interval methionine 1 to glutamate 225 is tRNA (mnm(5)s(2)U34)-methyltransferase. The tract at residues isoleucine 252–leucine 613 is FAD-dependent cmnm(5)s(2)U34 oxidoreductase.

It in the N-terminal section; belongs to the methyltransferase superfamily. tRNA (mnm(5)s(2)U34)-methyltransferase family. The protein in the C-terminal section; belongs to the DAO family. Requires FAD as cofactor.

It is found in the cytoplasm. It catalyses the reaction 5-aminomethyl-2-thiouridine(34) in tRNA + S-adenosyl-L-methionine = 5-methylaminomethyl-2-thiouridine(34) in tRNA + S-adenosyl-L-homocysteine + H(+). Its function is as follows. Catalyzes the last two steps in the biosynthesis of 5-methylaminomethyl-2-thiouridine (mnm(5)s(2)U) at the wobble position (U34) in tRNA. Catalyzes the FAD-dependent demodification of cmnm(5)s(2)U34 to nm(5)s(2)U34, followed by the transfer of a methyl group from S-adenosyl-L-methionine to nm(5)s(2)U34, to form mnm(5)s(2)U34. The protein is tRNA 5-methylaminomethyl-2-thiouridine biosynthesis bifunctional protein MnmC of Campylobacter jejuni subsp. jejuni serotype O:6 (strain 81116 / NCTC 11828).